The sequence spans 510 residues: Cytochrome P450 monooxygenase penQ (510 aa).

The helical transmembrane segment at 9–26 (WIVTLIVAATTYCTLRWV) threads the bilayer. N148 and N341 each carry an N-linked (GlcNAc...) asparagine glycan. Heme is bound at residue C448. N-linked (GlcNAc...) asparagine glycosylation is present at N482.

It belongs to the cytochrome P450 family. It depends on heme as a cofactor.

The protein resides in the membrane. It participates in secondary metabolite biosynthesis. Cytochrome P450 monooxygenase; part of the gene cluster that mediates the biosynthesis of the indole diterpenes penitrems. The geranylgeranyl diphosphate (GGPP) synthase penG catalyzes the first step in penitrem biosynthesis via conversion of farnesyl pyrophosphate and isopentyl pyrophosphate into geranylgeranyl pyrophosphate (GGPP). Condensation of indole-3-glycerol phosphate with GGPP by the prenyl transferase penC then forms 3-geranylgeranylindole (3-GGI). Epoxidation by the FAD-dependent monooxygenase penM leads to a epoxidized-GGI that is substrate of the terpene cyclase penB for cyclization to yield paspaline. Paspaline is subsequently converted to 13-desoxypaxilline by the cytochrome P450 monooxygenase penP, the latter being then converted to paxilline by the cytochrome P450 monooxygenase penQ. Paxilline is converted to beta-paxitriol via C-10 ketoreduction by the short-chain dehydrogenase PC-15 which can be monoprenylated at the C-20 by the indole diterpene prenyltransferase penD. A two-step elimination (acetylation and elimination) process performed by the O-acetyltransferase PC-16 and the P.simplicissimum ptmI-ortholog not yet identified in P.crustosum, leads to the production of the prenylated form of penijanthine. The FAD-linked oxidoreductase ptmO then converts the prenylated form of penijanthine into PC-M5 which is in turn transformed into PC-M4 by the aromatic dimethylallyltransferase PC-22. A series of oxidation steps involving 4 cytochrome P450 monooxygenases (PC-21, PC-05, PC-23, PC-20) and a FAD-dependent monooxygenase (PC-14) are required for the transformation of PC-M4 to penitrems A and E. Synthesis of these final products is proposed to proceed via penitrems D and C (PC-21, PC-05, PC-14) and penitrems B and F (PC-21, PC-05, PC-14, PC-23). This is Cytochrome P450 monooxygenase penQ from Penicillium crustosum (Blue mold fungus).